Reading from the N-terminus, the 83-residue chain is Cytochrome b559 subunit alpha (83 aa).

Residues 21–35 form a helical membrane-spanning segment; it reads IIHSITIPSLFIAGW. Heme is bound at residue His-23.

Belongs to the PsbE/PsbF family. In terms of assembly, heterodimer of an alpha subunit and a beta subunit. PSII is composed of 1 copy each of membrane proteins PsbA, PsbB, PsbC, PsbD, PsbE, PsbF, PsbH, PsbI, PsbJ, PsbK, PsbL, PsbM, PsbT, PsbX, PsbY, PsbZ, Psb30/Ycf12, at least 3 peripheral proteins of the oxygen-evolving complex and a large number of cofactors. It forms dimeric complexes. Requires heme b as cofactor.

The protein localises to the plastid. It localises to the chloroplast thylakoid membrane. Functionally, this b-type cytochrome is tightly associated with the reaction center of photosystem II (PSII). PSII is a light-driven water:plastoquinone oxidoreductase that uses light energy to abstract electrons from H(2)O, generating O(2) and a proton gradient subsequently used for ATP formation. It consists of a core antenna complex that captures photons, and an electron transfer chain that converts photonic excitation into a charge separation. The polypeptide is Cytochrome b559 subunit alpha (Lotus japonicus (Lotus corniculatus var. japonicus)).